Reading from the N-terminus, the 700-residue chain is Leucine zipper putative tumor suppressor 3 (700 aa).

4 disordered regions span residues 1-20 (MAPADLASEGPKLEDPPAPH), 40-121 (RADP…SEDK), 133-188 (LRGS…SEPL), and 202-344 (FHSM…PPSP). Positions 109-121 (NRERPGRYPSEDK) are enriched in basic and acidic residues. Residues 203 to 216 (HSMQNLCPPQTNGT) show a composition bias toward polar residues. 2 stretches are compositionally biased toward low complexity: residues 248–265 (DSGRNSLTSLPTYSSSYS) and 301–321 (GTSDSGRASSKSGSSSSMGRS). Positions 322–333 (GHLGSGEGGNGG) are enriched in gly residues. Phosphoserine is present on residues Ser-343 and Ser-345. Coiled coils occupy residues 345–523 (SALI…SLRD) and 597–666 (TRAL…RLRE). Residues 662–700 (RRLRERGAAGGSSTPTPQHGEEKKAWTPSRLERIESTEI) form a disordered region. Positions 680-700 (HGEEKKAWTPSRLERIESTEI) are enriched in basic and acidic residues.

Belongs to the LZTS3 family. In terms of assembly, interacts (via C-terminus) with SHANK3 (via PDZ domain). Interacts (via coiled coil) with SIPA1L1. Can form homooligomers.

It localises to the synapse. The protein resides in the postsynaptic density. It is found in the cell projection. Its subcellular location is the dendritic spine. The protein localises to the dendrite. It localises to the cytoplasm. The protein resides in the cytoskeleton. May be involved in promoting the maturation of dendritic spines, probably via regulating SIPA1L1 levels at the postsynaptic density of synapses. This chain is Leucine zipper putative tumor suppressor 3, found in Mus musculus (Mouse).